A 153-amino-acid chain; its full sequence is Large ribosomal subunit protein uL30 (153 aa).

The protein belongs to the universal ribosomal protein uL30 family. As to quaternary structure, part of the 50S ribosomal subunit.

The chain is Large ribosomal subunit protein uL30 from Methanocella arvoryzae (strain DSM 22066 / NBRC 105507 / MRE50).